A 624-amino-acid chain; its full sequence is Probable Xaa-Pro aminopeptidase P (624 aa).

Mn(2+) contacts are provided by D421, D432, E530, and E544.

This sequence belongs to the peptidase M24B family. It depends on Mn(2+) as a cofactor.

The enzyme catalyses Release of any N-terminal amino acid, including proline, that is linked to proline, even from a dipeptide or tripeptide.. In terms of biological role, catalyzes the removal of a penultimate prolyl residue from the N-termini of peptides. This Arthroderma otae (strain ATCC MYA-4605 / CBS 113480) (Microsporum canis) protein is Probable Xaa-Pro aminopeptidase P (AMPP).